The following is a 63-amino-acid chain: Large ribosomal subunit protein bL28 (63 aa).

Residues 1–20 (MSRRCAITGKGPMVGNNVSH) form a disordered region.

This sequence belongs to the bacterial ribosomal protein bL28 family.

This chain is Large ribosomal subunit protein bL28, found in Campylobacter curvus (strain 525.92).